Consider the following 288-residue polypeptide: 4-hydroxybenzoate octaprenyltransferase (288 aa).

The next 7 membrane-spanning stretches (helical) occupy residues 38 to 58 (IAAQ…GVFL), 98 to 120 (ILFA…MTIW), 141 to 161 (LLQV…FSAV), 163 to 183 (ESLP…SVIY), 213 to 233 (LIIG…GSLA), 238 to 258 (VYYI…KLMV), and 268 to 288 (AFLN…LSYL).

This sequence belongs to the UbiA prenyltransferase family. It depends on Mg(2+) as a cofactor.

It localises to the cell inner membrane. The catalysed reaction is all-trans-octaprenyl diphosphate + 4-hydroxybenzoate = 4-hydroxy-3-(all-trans-octaprenyl)benzoate + diphosphate. Its pathway is cofactor biosynthesis; ubiquinone biosynthesis. Catalyzes the prenylation of para-hydroxybenzoate (PHB) with an all-trans polyprenyl group. Mediates the second step in the final reaction sequence of ubiquinone-8 (UQ-8) biosynthesis, which is the condensation of the polyisoprenoid side chain with PHB, generating the first membrane-bound Q intermediate 3-octaprenyl-4-hydroxybenzoate. The polypeptide is 4-hydroxybenzoate octaprenyltransferase (Providencia stuartii).